We begin with the raw amino-acid sequence, 1400 residues long: DNA-directed RNA polymerase subunit beta' (1400 aa).

The Zn(2+) site is built by C71, C73, C86, and C89. Positions 462, 464, and 466 each coordinate Mg(2+). Residues C811, C885, C892, and C895 each coordinate Zn(2+).

The protein belongs to the RNA polymerase beta' chain family. The RNAP catalytic core consists of 2 alpha, 1 beta, 1 beta' and 1 omega subunit. When a sigma factor is associated with the core the holoenzyme is formed, which can initiate transcription. Requires Mg(2+) as cofactor. Zn(2+) serves as cofactor.

It carries out the reaction RNA(n) + a ribonucleoside 5'-triphosphate = RNA(n+1) + diphosphate. Its function is as follows. DNA-dependent RNA polymerase catalyzes the transcription of DNA into RNA using the four ribonucleoside triphosphates as substrates. The polypeptide is DNA-directed RNA polymerase subunit beta' (Brucella suis biovar 1 (strain 1330)).